The primary structure comprises 205 residues: Protease (205 aa).

Residues histidine 54, aspartate 71, and cysteine 122 contribute to the active site.

It belongs to the peptidase C5 family. As to quaternary structure, interacts with protease cofactor pVI-C; this interaction is necessary for protease activation.

The protein resides in the virion. Its subcellular location is the host nucleus. It catalyses the reaction Cleaves proteins of the adenovirus and its host cell at two consensus sites: -Yaa-Xaa-Gly-Gly-|-Xaa- and -Yaa-Xaa-Gly-Xaa-|-Gly- (in which Yaa is Met, Ile or Leu, and Xaa is any amino acid).. Requires DNA and protease cofactor for maximal activation. Inside nascent virions, becomes partially activated by binding to the viral DNA, allowing it to cleave the cofactor that binds to the protease and fully activates it. Actin, like the viral protease cofactor, seems to act as a cofactor in the cleavage of cytokeratin 18 and of actin itself. Cleaves viral precursor proteins (pTP, pIIIa, pVI, pVII, pVIII, and pX) inside newly assembled particles giving rise to mature virions. Protease complexed to its cofactor slides along the viral DNA to specifically locate and cleave the viral precursors. Mature virions have a weakened organization compared to the unmature virions, thereby facilitating subsequent uncoating. Without maturation, the particle lacks infectivity and is unable to uncoat. Late in adenovirus infection, in the cytoplasm, may participate in the cytoskeleton destruction. Cleaves host cell cytoskeletal keratins K7 and K18. This chain is Protease, found in Homo sapiens (Human).